A 501-amino-acid chain; its full sequence is Glutamyl-tRNA(Gln) amidotransferase subunit A (501 aa).

Catalysis depends on charge relay system residues Lys-80 and Ser-155. Ser-179 functions as the Acyl-ester intermediate in the catalytic mechanism.

This sequence belongs to the amidase family. GatA subfamily. Heterotrimer of A, B and C subunits.

The catalysed reaction is L-glutamyl-tRNA(Gln) + L-glutamine + ATP + H2O = L-glutaminyl-tRNA(Gln) + L-glutamate + ADP + phosphate + H(+). In terms of biological role, allows the formation of correctly charged Gln-tRNA(Gln) through the transamidation of misacylated Glu-tRNA(Gln) in organisms which lack glutaminyl-tRNA synthetase. The reaction takes place in the presence of glutamine and ATP through an activated gamma-phospho-Glu-tRNA(Gln). In Cupriavidus pinatubonensis (strain JMP 134 / LMG 1197) (Cupriavidus necator (strain JMP 134)), this protein is Glutamyl-tRNA(Gln) amidotransferase subunit A.